A 418-amino-acid chain; its full sequence is MAGSLPPCVVDCGTGYTKLGYAGNTEPQFIIPSCIAIRESAKVVDQAQRRVLRGVDDLDFFIGDEAIDKPTYATKWPIRHGIVEDWDLMERFMEQVVFKYLRAEPEDHYFLMTEPPLNTPENREYLAEIMFESFNVPGLYIAVQAVLALAASWTSRQVGERTLTGIVIDSGDGVTHVIPVAEGYVIGSCIKHIPIAGRDITYFIQQLLREREVGIPPEQSLETAKAIKEKYCYICPDIVREFAKYDVDPRKWIKQYTGINAINQKKFIIDVGYERFLGPEIFFHPEFANPDFMESISDVVDEVIQSCPIDVRRPLYKNVVLSGGSTMFRDFGRRLQRDLKRVVDARLKLSQELSGGRIKPKPVEVQVVTHHMQRYAVWFGGSMLASTPEFFQVCHTKKDYEEYGPSICRHNPVFGVMS.

The protein belongs to the actin family. ARP3 subfamily. Interacts with the Arp2/3 complex composed of ARP2, ARP3, ARPC1B, ARPC1B/p41-ARC, ARPC2/p34-ARC, ARPC3/p21-ARC, ARPC4/p20-ARC and ARPC5/p16-ARC.

The protein resides in the cytoplasm. The protein localises to the cytoskeleton. It is found in the cell projection. Its function is as follows. Plays a role in the organization of the actin cytoskeleton. May function as ATP-binding component of the Arp2/3 complex which is involved in regulation of actin polymerization and together with an activating nucleation-promoting factor (NPF) mediates the formation of branched actin networks. May decrease the metastatic potential of tumors. The protein is Actin-related protein 3B (Actr3b) of Mus musculus (Mouse).